The chain runs to 224 residues: dTTP/UTP pyrophosphatase (224 aa).

Catalysis depends on aspartate 77, which acts as the Proton acceptor.

The protein belongs to the Maf family. YhdE subfamily. Requires a divalent metal cation as cofactor.

The protein localises to the cytoplasm. It catalyses the reaction dTTP + H2O = dTMP + diphosphate + H(+). The catalysed reaction is UTP + H2O = UMP + diphosphate + H(+). Nucleoside triphosphate pyrophosphatase that hydrolyzes dTTP and UTP. May have a dual role in cell division arrest and in preventing the incorporation of modified nucleotides into cellular nucleic acids. The chain is dTTP/UTP pyrophosphatase from Dehalococcoides mccartyi (strain ATCC BAA-2266 / KCTC 15142 / 195) (Dehalococcoides ethenogenes (strain 195)).